Here is a 509-residue protein sequence, read N- to C-terminus: Bifunctional pantoate ligase/cytidylate kinase (509 aa).

The interval 1-275 (MKKLIIRKTE…CGETRLIDHV (275 aa)) is pantoate--beta-alanine ligase. 29–36 (MGNLHDGH) serves as a coordination point for ATP. His36 (proton donor) is an active-site residue. Gln61 provides a ligand contact to (R)-pantoate. Gln61 contacts beta-alanine. 149–152 (GEKD) serves as a coordination point for ATP. Gln155 lines the (R)-pantoate pocket. An ATP-binding site is contributed by 186–189 (LSSR). The interval 276-509 (FLMKRRPIIA…DKIPKESEIK (234 aa)) is cytidylate kinase.

This sequence in the N-terminal section; belongs to the pantothenate synthetase family. In the C-terminal section; belongs to the cytidylate kinase family. Type 1 subfamily.

The protein localises to the cytoplasm. It carries out the reaction (R)-pantoate + beta-alanine + ATP = (R)-pantothenate + AMP + diphosphate + H(+). The catalysed reaction is CMP + ATP = CDP + ADP. It catalyses the reaction dCMP + ATP = dCDP + ADP. The protein operates within cofactor biosynthesis; (R)-pantothenate biosynthesis; (R)-pantothenate from (R)-pantoate and beta-alanine: step 1/1. Functionally, catalyzes the condensation of pantoate with beta-alanine in an ATP-dependent reaction via a pantoyl-adenylate intermediate. Its function is as follows. Catalyzes the transfer of a phosphate group from ATP to either CMP or dCMP to form CDP or dCDP and ADP, respectively. The chain is Bifunctional pantoate ligase/cytidylate kinase from Prochlorococcus marinus (strain AS9601).